A 380-amino-acid polypeptide reads, in one-letter code: DNA primase small subunit PriS (380 aa).

Residues Asp101, Asp103, and Asp282 contribute to the active site.

This sequence belongs to the eukaryotic-type primase small subunit family. Heterodimer of a small subunit (PriS) and a large subunit (PriL). Mg(2+) serves as cofactor. Requires Mn(2+) as cofactor.

Its function is as follows. Catalytic subunit of DNA primase, an RNA polymerase that catalyzes the synthesis of short RNA molecules used as primers for DNA polymerase during DNA replication. The small subunit contains the primase catalytic core and has DNA synthesis activity on its own. Binding to the large subunit stabilizes and modulates the activity, increasing the rate of DNA synthesis while decreasing the length of the DNA fragments, and conferring RNA synthesis capability. The DNA polymerase activity may enable DNA primase to also catalyze primer extension after primer synthesis. May also play a role in DNA repair. The chain is DNA primase small subunit PriS from Hyperthermus butylicus (strain DSM 5456 / JCM 9403 / PLM1-5).